A 654-amino-acid chain; its full sequence is tRNA 5-methylaminomethyl-2-thiouridine biosynthesis bifunctional protein MnmC (654 aa).

The tract at residues 1–235 is tRNA (mnm(5)s(2)U34)-methyltransferase; sequence MSDFQHAQLD…KREMLSGTYQ (235 aa). Residues 261–654 form an FAD-dependent cmnm(5)s(2)U34 oxidoreductase region; sequence VGGGLAGCAS…LRDLVRGQRG (394 aa).

In the N-terminal section; belongs to the methyltransferase superfamily. tRNA (mnm(5)s(2)U34)-methyltransferase family. The protein in the C-terminal section; belongs to the DAO family. Requires FAD as cofactor.

It is found in the cytoplasm. The catalysed reaction is 5-aminomethyl-2-thiouridine(34) in tRNA + S-adenosyl-L-methionine = 5-methylaminomethyl-2-thiouridine(34) in tRNA + S-adenosyl-L-homocysteine + H(+). Its function is as follows. Catalyzes the last two steps in the biosynthesis of 5-methylaminomethyl-2-thiouridine (mnm(5)s(2)U) at the wobble position (U34) in tRNA. Catalyzes the FAD-dependent demodification of cmnm(5)s(2)U34 to nm(5)s(2)U34, followed by the transfer of a methyl group from S-adenosyl-L-methionine to nm(5)s(2)U34, to form mnm(5)s(2)U34. This chain is tRNA 5-methylaminomethyl-2-thiouridine biosynthesis bifunctional protein MnmC, found in Pseudomonas aeruginosa (strain ATCC 15692 / DSM 22644 / CIP 104116 / JCM 14847 / LMG 12228 / 1C / PRS 101 / PAO1).